Here is a 697-residue protein sequence, read N- to C-terminus: Elongation factor G (697 aa).

A tr-type G domain is found at 8–282; sequence ENTRNIGIMA…AIVDYMPSPV (275 aa). GTP is bound by residues 17-24, 81-85, and 135-138; these read AHIDAGKT, DTPGH, and NKMD.

The protein belongs to the TRAFAC class translation factor GTPase superfamily. Classic translation factor GTPase family. EF-G/EF-2 subfamily.

The protein localises to the cytoplasm. In terms of biological role, catalyzes the GTP-dependent ribosomal translocation step during translation elongation. During this step, the ribosome changes from the pre-translocational (PRE) to the post-translocational (POST) state as the newly formed A-site-bound peptidyl-tRNA and P-site-bound deacylated tRNA move to the P and E sites, respectively. Catalyzes the coordinated movement of the two tRNA molecules, the mRNA and conformational changes in the ribosome. This is Elongation factor G from Acetivibrio thermocellus (strain ATCC 27405 / DSM 1237 / JCM 9322 / NBRC 103400 / NCIMB 10682 / NRRL B-4536 / VPI 7372) (Clostridium thermocellum).